The sequence spans 380 residues: Cytochrome b (380 aa).

A run of 4 helical transmembrane segments spans residues 34 to 54 (FGSL…FLAM), 78 to 99 (WLLR…YMHI), 114 to 134 (WNIG…GYVL), and 179 to 199 (FFAF…VHLL). The heme b site is built by histidine 84 and histidine 98. Heme b contacts are provided by histidine 183 and histidine 197. Histidine 202 provides a ligand contact to a ubiquinone. A run of 4 helical transmembrane segments spans residues 227–247 (YKDV…ALFS), 289–309 (LGGV…PFVH), 321–341 (LAQV…WLGG), and 348–368 (YIFL…LLIP).

This sequence belongs to the cytochrome b family. In terms of assembly, the cytochrome bc1 complex contains 3 respiratory subunits (MT-CYB, CYC1 and UQCRFS1), 2 core proteins (UQCRC1 and UQCRC2) and probably 6 low-molecular weight proteins. Requires heme b as cofactor.

It localises to the mitochondrion inner membrane. In terms of biological role, component of the ubiquinol-cytochrome c reductase complex (complex III or cytochrome b-c1 complex) that is part of the mitochondrial respiratory chain. The b-c1 complex mediates electron transfer from ubiquinol to cytochrome c. Contributes to the generation of a proton gradient across the mitochondrial membrane that is then used for ATP synthesis. This Branchiostoma floridae (Florida lancelet) protein is Cytochrome b (MT-CYB).